The following is a 183-amino-acid chain: Ras-related protein Rap-2a (183 aa).

10–17 provides a ligand contact to GTP; sequence GSGGVGKS. Positions 32-40 match the Effector region motif; it reads YDPTIEDFY. Residues 57-61 and 116-119 each bind GTP; these read DTAGT and NKVD. 2 S-palmitoyl cysteine lipidation sites follow: C176 and C177. Position 180 is a cysteine methyl ester (C180). C180 carries the S-farnesyl cysteine lipid modification. The propeptide at 181 to 183 is removed in mature form; that stretch reads VIL.

This sequence belongs to the small GTPase superfamily. Ras family. As to quaternary structure, interacts (GTP-bound form) with RUNDC3A. Interacts with PLCE1. Interacts with ARHGAP29, SGSM1, SGSM2 and SGSM3. Interacts (GTP-bound form preferentially) with TNIK (via the CNH domain); the interaction is direct and recruits RAP2A to the E3 ubiquitin ligase NEDD4. Interacts with MINK1. Interacts (GTP-bound form preferentially) with MAP4K4. Interacts with cytoskeletal actin. Interacts with RGS14; the interaction is GTP-dependent. Ubiquitinated; undergoes 'Lys-63' monoubiquitination and diubiquitination by NEDD4. Multiple lysine residues are probably modified. Ubiquitination requires TNIK, prevents interaction with effectors and inactivates RAP2A. Ubiquitination by the ECS(RAB40B) complex leads to RAP2A localization to lamellipodia plasma membrane, activation, and regulation of sorting at early endosomes for recycling to the lamellipodia plasma membrane. Post-translationally, palmitoylated. Palmitoylation is required for association with recycling endosome membranes and activation of TNIK.

The protein resides in the midbody. It is found in the cell projection. It localises to the lamellipodium membrane. The protein localises to the golgi apparatus. Its subcellular location is the recycling endosome membrane. The protein resides in the lysosome. It carries out the reaction GTP + H2O = GDP + phosphate + H(+). Its activity is regulated as follows. Activated by the guanine nucleotide-exchange factors RAPGEF3 and RAPGEF4 in a cAMP-dependent manner. Nucleotide exchange is also specifically stimulated by RAPGEF5, RASGEF1A and RASGEF1B. Small GTP-binding protein which cycles between a GDP-bound inactive and a GTP-bound active form. In its active form interacts with and regulates several effectors including MAP4K4, MINK1 and TNIK. Part of a signaling complex composed of NEDD4, RAP2A and TNIK which regulates neuronal dendrite extension and arborization during development. More generally, it is part of several signaling cascades and may regulate cytoskeletal rearrangements, cell migration, cell adhesion and cell spreading. This is Ras-related protein Rap-2a (RAP2A) from Sus scrofa (Pig).